A 230-amino-acid polypeptide reads, in one-letter code: Heptaprenylglyceryl phosphate synthase (230 aa).

Lys-12 is a binding site for sn-glycerol 1-phosphate. The Mg(2+) site is built by Asp-14 and Thr-40. Sn-glycerol 1-phosphate contacts are provided by residues 159-164 (YVEYSG), Gly-189, and 209-210 (GD).

It belongs to the GGGP/HepGP synthase family. Group I subfamily. Homodimer. It depends on Mg(2+) as a cofactor.

It catalyses the reaction sn-glycerol 1-phosphate + all-trans-heptaprenyl diphosphate = 3-heptaprenyl-sn-glycero-1-phosphate + diphosphate. It participates in membrane lipid metabolism; glycerophospholipid metabolism. Its function is as follows. Prenyltransferase that catalyzes in vivo the transfer of the heptaprenyl moiety of heptaprenyl pyrophosphate (HepPP; 35 carbon atoms) to the C3 hydroxyl of sn-glycerol-1-phosphate (G1P), producing heptaprenylglyceryl phosphate (HepGP). This reaction is an ether-bond-formation step in the biosynthesis of archaea-type G1P-based membrane lipids found in Bacillales. This Staphylococcus epidermidis (strain ATCC 35984 / DSM 28319 / BCRC 17069 / CCUG 31568 / BM 3577 / RP62A) protein is Heptaprenylglyceryl phosphate synthase.